Consider the following 62-residue polypeptide: Photosystem II reaction center protein Z (62 aa).

The next 2 membrane-spanning stretches (helical) occupy residues 8–28 (ALIALVLFSFVMVIGVPVAYA) and 41–61 (YLGSAIWAILVVIVAILNFFV).

This sequence belongs to the PsbZ family. As to quaternary structure, PSII is composed of 1 copy each of membrane proteins PsbA, PsbB, PsbC, PsbD, PsbE, PsbF, PsbH, PsbI, PsbJ, PsbK, PsbL, PsbM, PsbT, PsbX, PsbY, PsbZ, Psb30/Ycf12, peripheral proteins PsbO, CyanoQ (PsbQ), PsbU, PsbV and a large number of cofactors. It forms dimeric complexes.

Its subcellular location is the cellular thylakoid membrane. Its function is as follows. May control the interaction of photosystem II (PSII) cores with the light-harvesting antenna, regulates electron flow through the 2 photosystem reaction centers. PSII is a light-driven water plastoquinone oxidoreductase, using light energy to abstract electrons from H(2)O, generating a proton gradient subsequently used for ATP formation. In Rippkaea orientalis (strain PCC 8801 / RF-1) (Cyanothece sp. (strain PCC 8801)), this protein is Photosystem II reaction center protein Z.